We begin with the raw amino-acid sequence, 372 residues long: 18-hydroxynorfluorocurarine reductase (372 aa).

The Zn(2+) site is built by cysteine 47, aspartate 50, histidine 69, glutamate 70, cysteine 100, cysteine 103, cysteine 106, cysteine 114, and cysteine 172. NADP(+) contacts are provided by residues 197–202 (GLGGIG), lysine 226, 283–285 (LGA), serine 307, and arginine 354.

It belongs to the zinc-containing alcohol dehydrogenase family. In terms of assembly, homodimer. Requires Zn(2+) as cofactor.

It catalyses the reaction (19E)-cur-19-en-17-al + NADP(+) = norfluorocurarine + NADPH + H(+). The catalysed reaction is 17,18-epoxy-17-hydroxycur-19-ene + NADP(+) = 18-hydroxynorfluorocurarine + NADPH + H(+). It participates in alkaloid biosynthesis. Its function is as follows. Alcohol dehydrogenase involved in the biosynthesis of curare monoterpene indole alkaloids (MIAs), natural products such as diaboline, a pharmacologically active compound used to regulate blood pressure. Curare alkaloids act as animal glycine receptor antagonists. Catalyzes the conversion of norfluorocurarine to desoxy Wieland-Gumlich aldehyde, and of 18-OH norfluorocurarine to Wieland-Gumlich aldehyde. This is 18-hydroxynorfluorocurarine reductase from Strychnos sp.